A 440-amino-acid chain; its full sequence is MSSEQSHRLRKYNNLPVWVVEDHHDVLPFIYRAIGSKHLPVSNISFIHFDSHPDLLIPVNMPADTVFDKESLFSELSIENWIMPVVYAGHFSQVIWIHPCWAQQIKEGRHCFLVGKDKSTTTIRVTSTDDYFLSDGLYVPEEQLESPKSLHLDVILLEPIREQDWEYKEKGETVAKKIKLEESDQVVEGSSSGIQSSTSESSEDGLMKPTYLNASTKTSNETCTLDSNSNLAKNIIQILEKGTVYVLDIDLDFFSVKNPFKEMYTQDEYKILQELYSFKRPSVHSLEEELVDCVENRVHQLEDLEAAFADFCEDDSDETVQRWASNPGMNSLVQLVHSLKSRMEAPDYEMIHQAGLTCDYAELPHHVSTETEIEGLLQSVKNLLTCLPKPTLVTLARSSLDDYCPSEQVDYIQEKVLDVLRSLYGSLDVHLEFSPGSSSA.

The interval 187 to 207 (VEGSSSGIQSSTSESSEDGLM) is disordered. Over residues 188-200 (EGSSSGIQSSTSE) the composition is skewed to low complexity.

This sequence belongs to the UPF0489 family.

The chain is UPF0489 protein C5orf22 homolog from Xenopus tropicalis (Western clawed frog).